The sequence spans 126 residues: Large ribosomal subunit protein uL29 (126 aa).

The protein belongs to the universal ribosomal protein uL29 family.

The sequence is that of Large ribosomal subunit protein uL29 (rpl35) from Dictyostelium discoideum (Social amoeba).